The sequence spans 261 residues: Cytochrome c oxidase subunit 3 (261 aa).

Residues 1–15 lie on the Mitochondrial matrix side of the membrane; it reads MTHQTHAYHMVNPSP. Residues 16–34 traverse the membrane as a helical segment; it reads WPLTGALSALLMTSGLIMW. Residues 35-40 lie on the Mitochondrial intermembrane side of the membrane; sequence FHYNSM. The helical transmembrane segment at 41–66 threads the bilayer; the sequence is SLLTLGFTTNLLTMYQWWRDVIREGT. Residues 67 to 72 lie on the Mitochondrial matrix side of the membrane; the sequence is FQGHHT. A helical transmembrane segment spans residues 73 to 105; sequence PIVQKGLRYGMVLFIVSEVFFFAGFFWAFYHSS. Residues 106-128 are Mitochondrial intermembrane-facing; the sequence is LAPTPELGGCWPPTGIIPLNPLE. A helical transmembrane segment spans residues 129-152; that stretch reads VPLLNTSVLLASGVSITWAHHSLM. Residues 153-155 lie on the Mitochondrial matrix side of the membrane; the sequence is EGN. The helical transmembrane segment at 156–183 threads the bilayer; the sequence is RKHMLQALFITISLGVYFTLLQASEYYE. Residues 184–190 lie on the Mitochondrial intermembrane side of the membrane; the sequence is TSFTISD. A helical transmembrane segment spans residues 191–223; sequence GVYGSTFFMATGFHGLHVIIGSTFLIVCFLRQL. The Mitochondrial matrix portion of the chain corresponds to 224–232; that stretch reads YYHFTSNHH. A helical membrane pass occupies residues 233–256; the sequence is FGFEAAAWYWHFVDVVWLFLYVSI. The Mitochondrial intermembrane portion of the chain corresponds to 257 to 261; it reads YWWGS.

Belongs to the cytochrome c oxidase subunit 3 family. In terms of assembly, component of the cytochrome c oxidase (complex IV, CIV), a multisubunit enzyme composed of 14 subunits. The complex is composed of a catalytic core of 3 subunits MT-CO1, MT-CO2 and MT-CO3, encoded in the mitochondrial DNA, and 11 supernumerary subunits COX4I, COX5A, COX5B, COX6A, COX6B, COX6C, COX7A, COX7B, COX7C, COX8 and NDUFA4, which are encoded in the nuclear genome. The complex exists as a monomer or a dimer and forms supercomplexes (SCs) in the inner mitochondrial membrane with NADH-ubiquinone oxidoreductase (complex I, CI) and ubiquinol-cytochrome c oxidoreductase (cytochrome b-c1 complex, complex III, CIII), resulting in different assemblies (supercomplex SCI(1)III(2)IV(1) and megacomplex MCI(2)III(2)IV(2)).

Its subcellular location is the mitochondrion inner membrane. The catalysed reaction is 4 Fe(II)-[cytochrome c] + O2 + 8 H(+)(in) = 4 Fe(III)-[cytochrome c] + 2 H2O + 4 H(+)(out). Component of the cytochrome c oxidase, the last enzyme in the mitochondrial electron transport chain which drives oxidative phosphorylation. The respiratory chain contains 3 multisubunit complexes succinate dehydrogenase (complex II, CII), ubiquinol-cytochrome c oxidoreductase (cytochrome b-c1 complex, complex III, CIII) and cytochrome c oxidase (complex IV, CIV), that cooperate to transfer electrons derived from NADH and succinate to molecular oxygen, creating an electrochemical gradient over the inner membrane that drives transmembrane transport and the ATP synthase. Cytochrome c oxidase is the component of the respiratory chain that catalyzes the reduction of oxygen to water. Electrons originating from reduced cytochrome c in the intermembrane space (IMS) are transferred via the dinuclear copper A center (CU(A)) of subunit 2 and heme A of subunit 1 to the active site in subunit 1, a binuclear center (BNC) formed by heme A3 and copper B (CU(B)). The BNC reduces molecular oxygen to 2 water molecules using 4 electrons from cytochrome c in the IMS and 4 protons from the mitochondrial matrix. The chain is Cytochrome c oxidase subunit 3 (MT-CO3) from Canis lupus (Gray wolf).